Here is a 532-residue protein sequence, read N- to C-terminus: Pentatricopeptide repeat-containing protein At5g66500, mitochondrial (532 aa).

The N-terminal 33 residues, 1-33, are a transit peptide targeting the mitochondrion; that stretch reads MFACLRIGRFIRLGNVTVKSTNLVLRCVFIRNF. PPR repeat units lie at residues 48 to 82, 83 to 117, 118 to 148, 149 to 183, 184 to 218, 223 to 248, 250 to 280, 281 to 314, 315 to 345, 346 to 380, 383 to 413, and 419 to 453; these read DLSSLNSQLSSHLRSGNPNDTLALFLQIHRASPDL, SSHTFTPVLGACSLLSYPETGRQVHALMIKQGAET, GTISKTALIDMYSKYGHLVDSVRVFESVEEK, DLVSWNALLSGFLRNGKGKEALGVFAAMYRERVEI, SEFTLSSVVKTCASLKILQQGKQVHAMVVVTGRDL, TAMISFYSSVGLINEAMKVYNSLNVH, DEVMLNSLISGCIRNRNYKEAFLLMSRQRPN, VRVLSSSLAGCSDNSDLWIGKQIHCVALRNGFVS, DSKLCNGLMDMYGKCGQIVQARTIFRAIPSK, SVVSWTSMIDAYAVNGDGVKALEIFREMCEEGSGV, NSVTFLVVISACAHAGLVKEGKECFGMMKEK, and GTEHYVCFIDILSKAGETEEIWRLVERMMENDNQS. Positions 458–532 are type E motif; degenerate; that stretch reads IWVAVLSACS…VKTAGHSLFI (75 aa).

Belongs to the PPR family. PCMP-E subfamily.

The protein resides in the mitochondrion. The chain is Pentatricopeptide repeat-containing protein At5g66500, mitochondrial (PCMP-E38) from Arabidopsis thaliana (Mouse-ear cress).